We begin with the raw amino-acid sequence, 479 residues long: MSAAETGSEPSQGAGPSEATLHSLREAFNAGRTRPTEFRTAQLRSLGRFLQENKELLQDALAKDVGKSGFESDMSEIILCENEVDLALKNLQTWMKDEPVSTNLLTKLSSAFIRKEPFGLVLIIAPWNYPVNLMIIPLVGAIAAGNCVVLKPSEISKNTEKVLAELLPQYLDQSCFAVMLGGPEETRQLLEHKFDYIFFTGSPRVGKIVMTAAAKHLTPITLELGGKNPCYVDDNCDPQTVANRVAWFRYFNAGQTCVAPDYILCSQEMQERLVPALQNSITRFYGDNPQTSPNLGRIINQKHFKRLQGLLGCGRVAIGGQSDEGERYIAPTVLVDVQETEPVMQEEIFGPILPLVTVRSLDEAIEFINRREKPLALYAFSNNNQVVNQMLERTSSGGFGGNDGFLYLTLPALPLGGVGNSGMGRYHGKFSFDTFSHHRACLLRSPGMEKLNDLRYPPYGPWNQQLISWAIGSRSCTLL.

Residues Glu-223 and Cys-257 contribute to the active site. Cys-476 is modified (cysteine methyl ester). The S-geranylgeranyl cysteine moiety is linked to residue Cys-476. The propeptide at 477 to 479 is removed in mature form; sequence TLL.

This sequence belongs to the aldehyde dehydrogenase family. Post-translationally, geranylgeranylation is important for localization to lipid droplets and enzyme activity. In terms of tissue distribution, expressed in testis, white adipose tissue, lung, small intestine, kidney, spleen and liver.

It localises to the lipid droplet. The catalysed reaction is an aldehyde + NAD(+) + H2O = a carboxylate + NADH + 2 H(+). It carries out the reaction a long-chain fatty aldehyde + NAD(+) + H2O = a long-chain fatty acid + NADH + 2 H(+). The enzyme catalyses a medium-chain fatty aldehyde + NAD(+) + H2O = a medium-chain fatty acid + NADH + 2 H(+). It catalyses the reaction hexadecanoate + NADH + 2 H(+) = hexadecanal + NAD(+) + H2O. The catalysed reaction is octanal + NAD(+) + H2O = octanoate + NADH + 2 H(+). It participates in alcohol metabolism; ethanol degradation; acetate from ethanol: step 2/2. In terms of biological role, oxidizes medium and long chain fatty aldehydes in lipid droplets into non-toxic fatty acids. This chain is Aldehyde dehydrogenase family 3 member B2, found in Mus musculus (Mouse).